We begin with the raw amino-acid sequence, 1025 residues long: NQIKKSNTSTGARIPKAMTNPADNFAGGQWKPPGRRSARTSATGMFVCEHCLRAFTTNTGRGLHIKRAHEEQANEAITTERSRARWTNEEMEAVQAEIDCEGRTAINQEILRIIPYQRTIDAIKCLRKQQKYKTIRERVANRRAENRARETELTRLETADEDPASQEQDNPNMSLKNWLKEVIESDDDRLCADLRTAIEMALAGQSPLDVCTVGCYQYTMTNLPLVPVRLGGPIYWCNAQSRSNPGETQRRQTIKESNNSWKKNMSKAAHIVLDGDTDACPAGLEGTEASGAIMRAGCPTTRHLRSRMQGEIKNLWRPISNDEIKEVEACKRTAAGPDGMTTTAWNSIDECIKSLFNMIMYHGQCPRRYLDSRTVLIPKEPGTMDPACFRPLSIASVALRHFHRILANRIGEHGLLDTRQRAFIVADGVAENTSLLSAMIKEARMKIKGLYIAILDVKKAFDSVEHRSILDALRRKKLPLEMRNYIMWVYRNSKTRLEVVKTKGRWIRPARGVRQGDPLSPLLFNCVMDAVLRRLPENTGFLMGAEKIGALVFADDLVLLAETREGLQASLSRIEAGLQEQGLEMMPRKCHTLALVPSGKEKKIKVETHKPFTVGNQEITQLGHADQWKYLGVVYNSYGPIQVKINIAGDLQRVTAAPLKPQQRMAILGMFLIPRFIHKLVLGRTSNADVRKGDKIIRKTVRGWLRLPHDTPIGYFHAPIKEGGLGIPAFESRIPELLKSRIEALGASNMQTARSLLGGDWVAERKKWINTQKIKNSEWAQKLHLTTDGKDLRDTRKAEASYSWIRDIHVAIPASVWIKYHHTRINALPTLMRMSRGRRTNGNALCRAGCGLPETLYHVVQQCPRTHGGRVLRHDKIAEQVAIFMQEKGWLVLREAHIRTSVGLRKPDIIARKGQDCKIIDCQIVTTGNDIRIQHERKIQYYASNWELRRSAATMIGHQGQVSVEAITISWKGVWEPRSYCLLRDCGIPKVKIKGLTTRVLLGAYLNFNTFSKATYRTERRRTAN.

The span at 1 to 11 (NQIKKSNTSTG) shows a compositional bias: polar residues. Positions 1–38 (NQIKKSNTSTGARIPKAMTNPADNFAGGQWKPPGRRSA) are disordered. Residues 46-69 (FVCEHCLRAFTTNTGRGLHIKRAH) form a C2H2-type zinc finger. Residues 146–158 (NRARETELTRLET) are compositionally biased toward basic and acidic residues. The segment at 146–172 (NRARETELTRLETADEDPASQEQDNPN) is disordered. The Reverse transcriptase domain occupies 358 to 635 (MIMYHGQCPR…DQWKYLGVVY (278 aa)). Residues 755–1025 (SLLGGDWVAE…YRTERRRTAN (271 aa)) form a nucleic acid-binding endonuclease region.

The enzyme catalyses DNA(n) + a 2'-deoxyribonucleoside 5'-triphosphate = DNA(n+1) + diphosphate. The sequence is that of Retrovirus-related Pol polyprotein from type-1 retrotransposable element R2 from Nasonia vitripennis (Parasitic wasp).